Here is a 326-residue protein sequence, read N- to C-terminus: tRNA uridine(34) hydroxylase (326 aa).

Positions 123–217 (ADPEVFVVDT…YLEEVPEEES (95 aa)) constitute a Rhodanese domain. Cys-177 functions as the Cysteine persulfide intermediate in the catalytic mechanism. Residues 293–326 (AVRGEQHVGGESAKQRQQRRAEKLAKKDVQRKQA) are disordered. Residues 311 to 326 (RRAEKLAKKDVQRKQA) show a composition bias toward basic and acidic residues.

The protein belongs to the TrhO family.

It catalyses the reaction uridine(34) in tRNA + AH2 + O2 = 5-hydroxyuridine(34) in tRNA + A + H2O. Functionally, catalyzes oxygen-dependent 5-hydroxyuridine (ho5U) modification at position 34 in tRNAs. In Vibrio campbellii (strain ATCC BAA-1116), this protein is tRNA uridine(34) hydroxylase.